The primary structure comprises 229 residues: tRNA (guanine-N(1)-)-methyltransferase (229 aa).

S-adenosyl-L-methionine contacts are provided by residues glycine 109 and 129–134 (IGDFIL).

This sequence belongs to the RNA methyltransferase TrmD family. In terms of assembly, homodimer.

The protein localises to the cytoplasm. It carries out the reaction guanosine(37) in tRNA + S-adenosyl-L-methionine = N(1)-methylguanosine(37) in tRNA + S-adenosyl-L-homocysteine + H(+). In terms of biological role, specifically methylates guanosine-37 in various tRNAs. In Helicobacter pylori (strain Shi470), this protein is tRNA (guanine-N(1)-)-methyltransferase.